The following is a 361-amino-acid chain: MLLELARWLAQDIRGFNVFNYITLRAVLATLTALTISFLVGPKLIRKLTEYKVGQSVRDDGPQTHLVKAGTPTMGGALILIAIVISTLLWADLSNRFVWVVLITTLGFGVIGWVDDWRKVVYRNPKGLSAKAKYFWQSLIGAGVAAYLFHTATVPAETELIVPFFKHLVLPLGAVSFIVLTYFVIVGTSNAVNLTDGLDGLAIMPTVMVASALAVFAYVAGHLYFSKYLGVPYVPGAGELTVFCAAIGGAGLGFLWFNAYPAEVFMGDVGALALGAALGTVAVIVRQEIVLFIMGGVFVMETISVMLQVGSFKLTGKRIFRMAPLHHHYELKGWKETQVVVRFWIITMMLVLVGLSTLKLR.

10 helical membrane passes run 21 to 41 (YITL…FLVG), 73 to 93 (TMGG…WADL), 97 to 117 (FVWV…VDDW), 134 to 154 (YFWQ…TATV), 168 to 188 (LVLP…IVGT), 200 to 220 (GLAI…AYVA), 237 to 257 (AGEL…FLWF), 264 to 284 (VFMG…VAVI), 289 to 309 (IVLF…MLQV), and 338 to 358 (QVVV…LSTL).

This sequence belongs to the glycosyltransferase 4 family. MraY subfamily. Mg(2+) serves as cofactor.

The protein resides in the cell inner membrane. The enzyme catalyses UDP-N-acetyl-alpha-D-muramoyl-L-alanyl-gamma-D-glutamyl-meso-2,6-diaminopimeloyl-D-alanyl-D-alanine + di-trans,octa-cis-undecaprenyl phosphate = di-trans,octa-cis-undecaprenyl diphospho-N-acetyl-alpha-D-muramoyl-L-alanyl-D-glutamyl-meso-2,6-diaminopimeloyl-D-alanyl-D-alanine + UMP. Its pathway is cell wall biogenesis; peptidoglycan biosynthesis. Catalyzes the initial step of the lipid cycle reactions in the biosynthesis of the cell wall peptidoglycan: transfers peptidoglycan precursor phospho-MurNAc-pentapeptide from UDP-MurNAc-pentapeptide onto the lipid carrier undecaprenyl phosphate, yielding undecaprenyl-pyrophosphoryl-MurNAc-pentapeptide, known as lipid I. This Methylobacillus flagellatus (strain ATCC 51484 / DSM 6875 / VKM B-1610 / KT) protein is Phospho-N-acetylmuramoyl-pentapeptide-transferase.